A 609-amino-acid polypeptide reads, in one-letter code: UvrABC system protein C (609 aa).

Residues 16–94 (SSAGVYRMYD…IKQYMPKYNV (79 aa)) enclose the GIY-YIG domain. The UVR domain occupies 203-238 (QQVISTLVAKMEQAAQQQEYEQAARFRDQIMALRKV).

This sequence belongs to the UvrC family. As to quaternary structure, interacts with UvrB in an incision complex.

The protein localises to the cytoplasm. The UvrABC repair system catalyzes the recognition and processing of DNA lesions. UvrC both incises the 5' and 3' sides of the lesion. The N-terminal half is responsible for the 3' incision and the C-terminal half is responsible for the 5' incision. The polypeptide is UvrABC system protein C (Shewanella putrefaciens (strain CN-32 / ATCC BAA-453)).